Consider the following 242-residue polypeptide: UDP-2,3-diacylglucosamine hydrolase (242 aa).

D8, H10, D41, N79, and H114 together coordinate Mn(2+). Position 79 to 80 (N79 to R80) interacts with substrate. Substrate is bound by residues D122, K164, K167, and H195. H195 and H197 together coordinate Mn(2+).

The protein belongs to the LpxH family. It depends on Mn(2+) as a cofactor.

The protein localises to the cell inner membrane. It carries out the reaction UDP-2-N,3-O-bis[(3R)-3-hydroxytetradecanoyl]-alpha-D-glucosamine + H2O = 2-N,3-O-bis[(3R)-3-hydroxytetradecanoyl]-alpha-D-glucosaminyl 1-phosphate + UMP + 2 H(+). It functions in the pathway glycolipid biosynthesis; lipid IV(A) biosynthesis; lipid IV(A) from (3R)-3-hydroxytetradecanoyl-[acyl-carrier-protein] and UDP-N-acetyl-alpha-D-glucosamine: step 4/6. Functionally, hydrolyzes the pyrophosphate bond of UDP-2,3-diacylglucosamine to yield 2,3-diacylglucosamine 1-phosphate (lipid X) and UMP by catalyzing the attack of water at the alpha-P atom. Involved in the biosynthesis of lipid A, a phosphorylated glycolipid that anchors the lipopolysaccharide to the outer membrane of the cell. The polypeptide is UDP-2,3-diacylglucosamine hydrolase (Vibrio cholerae serotype O1 (strain ATCC 39315 / El Tor Inaba N16961)).